Consider the following 376-residue polypeptide: Chaperone protein DnaJ (376 aa).

One can recognise a J domain in the interval 5 to 69 (DYYEVLGVSK…QKRAQYDQYG (65 aa)). The CR-type zinc-finger motif lies at 133-215 (GKDAEIEIPR…CHGKGRVTKT (83 aa)). Zn(2+)-binding residues include Cys-146, Cys-149, Cys-163, Cys-166, Cys-189, Cys-192, Cys-203, and Cys-206. CXXCXGXG motif repeat units lie at residues 146–153 (CDTCHGSG), 163–170 (CSHCGGKG), 189–196 (CQYCNGTG), and 203–210 (CPTCHGKG).

Belongs to the DnaJ family. Homodimer. It depends on Zn(2+) as a cofactor.

Its subcellular location is the cytoplasm. In terms of biological role, participates actively in the response to hyperosmotic and heat shock by preventing the aggregation of stress-denatured proteins and by disaggregating proteins, also in an autonomous, DnaK-independent fashion. Unfolded proteins bind initially to DnaJ; upon interaction with the DnaJ-bound protein, DnaK hydrolyzes its bound ATP, resulting in the formation of a stable complex. GrpE releases ADP from DnaK; ATP binding to DnaK triggers the release of the substrate protein, thus completing the reaction cycle. Several rounds of ATP-dependent interactions between DnaJ, DnaK and GrpE are required for fully efficient folding. Also involved, together with DnaK and GrpE, in the DNA replication of plasmids through activation of initiation proteins. This is Chaperone protein DnaJ from Listeria monocytogenes serotype 4b (strain CLIP80459).